Reading from the N-terminus, the 509-residue chain is UDP-N-acetylmuramoyl-L-alanyl-D-glutamate--2,6-diaminopimelate ligase (509 aa).

Position 32 (Ser32) interacts with UDP-N-acetyl-alpha-D-muramoyl-L-alanyl-D-glutamate. An ATP-binding site is contributed by 117–123; it reads GTNGKTT. UDP-N-acetyl-alpha-D-muramoyl-L-alanyl-D-glutamate contacts are provided by residues 159–160, Ser186, Gln192, and Arg194; that span reads TT. N6-carboxylysine is present on Lys226. Residues Arg401, 425-428, Gly476, and Glu480 each bind meso-2,6-diaminopimelate; that span reads DNPR. Residues 425-428 carry the Meso-diaminopimelate recognition motif motif; the sequence is DNPR.

This sequence belongs to the MurCDEF family. MurE subfamily. Mg(2+) serves as cofactor. Post-translationally, carboxylation is probably crucial for Mg(2+) binding and, consequently, for the gamma-phosphate positioning of ATP.

The protein resides in the cytoplasm. The enzyme catalyses UDP-N-acetyl-alpha-D-muramoyl-L-alanyl-D-glutamate + meso-2,6-diaminopimelate + ATP = UDP-N-acetyl-alpha-D-muramoyl-L-alanyl-gamma-D-glutamyl-meso-2,6-diaminopimelate + ADP + phosphate + H(+). The protein operates within cell wall biogenesis; peptidoglycan biosynthesis. In terms of biological role, catalyzes the addition of meso-diaminopimelic acid to the nucleotide precursor UDP-N-acetylmuramoyl-L-alanyl-D-glutamate (UMAG) in the biosynthesis of bacterial cell-wall peptidoglycan. The sequence is that of UDP-N-acetylmuramoyl-L-alanyl-D-glutamate--2,6-diaminopimelate ligase from Prochlorococcus marinus (strain NATL1A).